A 241-amino-acid chain; its full sequence is Phosphoribosylaminoimidazole-succinocarboxamide synthase (241 aa).

The protein belongs to the SAICAR synthetase family.

The enzyme catalyses 5-amino-1-(5-phospho-D-ribosyl)imidazole-4-carboxylate + L-aspartate + ATP = (2S)-2-[5-amino-1-(5-phospho-beta-D-ribosyl)imidazole-4-carboxamido]succinate + ADP + phosphate + 2 H(+). The protein operates within purine metabolism; IMP biosynthesis via de novo pathway; 5-amino-1-(5-phospho-D-ribosyl)imidazole-4-carboxamide from 5-amino-1-(5-phospho-D-ribosyl)imidazole-4-carboxylate: step 1/2. This is Phosphoribosylaminoimidazole-succinocarboxamide synthase from Lacticaseibacillus paracasei (strain ATCC 334 / BCRC 17002 / CCUG 31169 / CIP 107868 / KCTC 3260 / NRRL B-441) (Lactobacillus paracasei).